The sequence spans 530 residues: UPF0422 protein lpg2959 (530 aa).

The first 19 residues, 1 to 19, serve as a signal peptide directing secretion; sequence MKFKKIILALACLSSPLYA. Residues 20–66 adopt a coiled-coil conformation; that stretch reads DQDQQLKSEIQRLQHQAEDLQAQLNRLQKQLANHKSSQQKHEQQAAA. Residues 50-81 form a disordered region; that stretch reads LANHKSSQQKHEQQAAAKPAEPQSKPTVKSGA. Residues 63–75 show a composition bias toward low complexity; sequence QAAAKPAEPQSKP.

This sequence belongs to the UPF0422 family.

This Legionella pneumophila subsp. pneumophila (strain Philadelphia 1 / ATCC 33152 / DSM 7513) protein is UPF0422 protein lpg2959.